A 736-amino-acid chain; its full sequence is Catalase-peroxidase 2 (736 aa).

The first 23 residues, 1–23, serve as a signal peptide directing secretion; sequence MIKKTLPVLILLALSGSFSTAVA. Positions 102-223 form a cross-link, tryptophyl-tyrosyl-methioninium (Trp-Tyr) (with M-249); sequence WHGAGTYRTY…LAATQMGLIY (122 aa). Histidine 103 acts as the Proton acceptor in catalysis. Residues 223-249 constitute a cross-link (tryptophyl-tyrosyl-methioninium (Tyr-Met) (with W-102)); that stretch reads YVNPEGPGGKPDPLASAKDIREAFSRM. Histidine 264 provides a ligand contact to heme b.

The protein belongs to the peroxidase family. Peroxidase/catalase subfamily. Homodimer or homotetramer. The cofactor is heme b. Formation of the three residue Trp-Tyr-Met cross-link is important for the catalase, but not the peroxidase activity of the enzyme.

The protein localises to the periplasm. It catalyses the reaction H2O2 + AH2 = A + 2 H2O. It carries out the reaction 2 H2O2 = O2 + 2 H2O. In terms of biological role, bifunctional enzyme with both catalase and broad-spectrum peroxidase activity. This Escherichia coli O157:H7 protein is Catalase-peroxidase 2.